The sequence spans 281 residues: MAALKFTKMEGIGNDYIYIDSTQANIRLTPEQIQKISNRNFGIGSDGVIFIRNSKQGDFMMDMYNSDGSSSEMCGNGIRCVAKYIYDHGLTNSKNPKIETGAGVLEVDLKIGSGNKVDFVSVNMGKPILVPSKIPVNWKDEEAIIDQTFEIAGKNLKFTAVSMGNPHCVIFVDDCDQFPVTGIGPLIERHPIFPKRINVEFVTVRGKDHFYQRTWERGAGETLACGTGACAVTVAGNLTGKSGKEVKIDLRGGTLRIQWQESGNVLMTGPAKEIFSGEIEV.

Substrate is bound by residues N14 and N65. Residue C74 is the Proton donor of the active site. Residues 75 to 76 (GN), N165, N198, and 216 to 217 (ER) each bind substrate. C225 (proton acceptor) is an active-site residue. Substrate is bound at residue 226-227 (GT).

This sequence belongs to the diaminopimelate epimerase family. Homodimer.

It is found in the cytoplasm. The enzyme catalyses (2S,6S)-2,6-diaminopimelate = meso-2,6-diaminopimelate. It functions in the pathway amino-acid biosynthesis; L-lysine biosynthesis via DAP pathway; DL-2,6-diaminopimelate from LL-2,6-diaminopimelate: step 1/1. In terms of biological role, catalyzes the stereoinversion of LL-2,6-diaminopimelate (L,L-DAP) to meso-diaminopimelate (meso-DAP), a precursor of L-lysine and an essential component of the bacterial peptidoglycan. The polypeptide is Diaminopimelate epimerase (Leptospira borgpetersenii serovar Hardjo-bovis (strain JB197)).